The chain runs to 238 residues: tRNA1(Val) (adenine(37)-N6)-methyltransferase (238 aa).

Belongs to the methyltransferase superfamily. tRNA (adenine-N(6)-)-methyltransferase family.

The protein resides in the cytoplasm. It catalyses the reaction adenosine(37) in tRNA1(Val) + S-adenosyl-L-methionine = N(6)-methyladenosine(37) in tRNA1(Val) + S-adenosyl-L-homocysteine + H(+). Specifically methylates the adenine in position 37 of tRNA(1)(Val) (anticodon cmo5UAC). In Shewanella sp. (strain W3-18-1), this protein is tRNA1(Val) (adenine(37)-N6)-methyltransferase.